Consider the following 172-residue polypeptide: Large ribosomal subunit protein uL10 (172 aa).

This sequence belongs to the universal ribosomal protein uL10 family. As to quaternary structure, part of the ribosomal stalk of the 50S ribosomal subunit. The N-terminus interacts with L11 and the large rRNA to form the base of the stalk. The C-terminus forms an elongated spine to which L12 dimers bind in a sequential fashion forming a multimeric L10(L12)X complex.

Functionally, forms part of the ribosomal stalk, playing a central role in the interaction of the ribosome with GTP-bound translation factors. This Chlamydia trachomatis serovar A (strain ATCC VR-571B / DSM 19440 / HAR-13) protein is Large ribosomal subunit protein uL10.